We begin with the raw amino-acid sequence, 261 residues long: Acetylglutamate kinase (261 aa).

Substrate contacts are provided by residues 46-47, arginine 68, and asparagine 160; that span reads GG.

Belongs to the acetylglutamate kinase family. ArgB subfamily.

Its subcellular location is the cytoplasm. The catalysed reaction is N-acetyl-L-glutamate + ATP = N-acetyl-L-glutamyl 5-phosphate + ADP. The protein operates within amino-acid biosynthesis; L-arginine biosynthesis; N(2)-acetyl-L-ornithine from L-glutamate: step 2/4. In terms of biological role, catalyzes the ATP-dependent phosphorylation of N-acetyl-L-glutamate. In Shewanella loihica (strain ATCC BAA-1088 / PV-4), this protein is Acetylglutamate kinase.